Reading from the N-terminus, the 170-residue chain is Acireductone dioxygenase (170 aa).

Histidine 99, histidine 101, glutamate 105, and histidine 144 together coordinate Fe(2+). Residues histidine 99, histidine 101, glutamate 105, and histidine 144 each coordinate Ni(2+).

This sequence belongs to the acireductone dioxygenase (ARD) family. As to quaternary structure, monomer. Requires Fe(2+) as cofactor. Ni(2+) is required as a cofactor.

It catalyses the reaction 1,2-dihydroxy-5-(methylsulfanyl)pent-1-en-3-one + O2 = 3-(methylsulfanyl)propanoate + CO + formate + 2 H(+). The enzyme catalyses 1,2-dihydroxy-5-(methylsulfanyl)pent-1-en-3-one + O2 = 4-methylsulfanyl-2-oxobutanoate + formate + 2 H(+). Its pathway is amino-acid biosynthesis; L-methionine biosynthesis via salvage pathway; L-methionine from S-methyl-5-thio-alpha-D-ribose 1-phosphate: step 5/6. Functionally, catalyzes 2 different reactions between oxygen and the acireductone 1,2-dihydroxy-3-keto-5-methylthiopentene (DHK-MTPene) depending upon the metal bound in the active site. Fe-containing acireductone dioxygenase (Fe-ARD) produces formate and 2-keto-4-methylthiobutyrate (KMTB), the alpha-ketoacid precursor of methionine in the methionine recycle pathway. Ni-containing acireductone dioxygenase (Ni-ARD) produces methylthiopropionate, carbon monoxide and formate, and does not lie on the methionine recycle pathway. The sequence is that of Acireductone dioxygenase from Bacillus mycoides (strain KBAB4) (Bacillus weihenstephanensis).